The sequence spans 392 residues: GTPase Obg (392 aa).

Residues 1–159 form the Obg domain; it reads MKFVDEATIL…RDLQLELMLL (159 aa). The disordered stretch occupies residues 127-148; that stretch reads NSRFKSSVNRSPRQKTMGTPGD. A compositionally biased stretch (polar residues) spans 129–143; sequence RFKSSVNRSPRQKTM. The OBG-type G domain maps to 160–333; the sequence is ADVGMLGMPN…LCWDVMAFII (174 aa). GTP-binding positions include 166–173, 191–195, 213–216, 283–286, and 314–316; these read GMPNAGKS, FTTLV, DIPG, NKID, and SAA. Residues Ser173 and Thr193 each contribute to the Mg(2+) site. Residues 363–386 are compositionally biased toward acidic residues; it reads EQEVEVEDDEEWDEDWDEDDEEGV. The tract at residues 363-392 is disordered; that stretch reads EQEVEVEDDEEWDEDWDEDDEEGVEFIYKR.

The protein belongs to the TRAFAC class OBG-HflX-like GTPase superfamily. OBG GTPase family. In terms of assembly, monomer. It depends on Mg(2+) as a cofactor.

Its subcellular location is the cytoplasm. An essential GTPase which binds GTP, GDP and possibly (p)ppGpp with moderate affinity, with high nucleotide exchange rates and a fairly low GTP hydrolysis rate. Plays a role in control of the cell cycle, stress response, ribosome biogenesis and in those bacteria that undergo differentiation, in morphogenesis control. The protein is GTPase Obg of Enterobacter sp. (strain 638).